The following is a 102-amino-acid chain: Small ribosomal subunit protein uS10 (102 aa).

Belongs to the universal ribosomal protein uS10 family. Part of the 30S ribosomal subunit.

Involved in the binding of tRNA to the ribosomes. The sequence is that of Small ribosomal subunit protein uS10 from Methanothrix thermoacetophila (strain DSM 6194 / JCM 14653 / NBRC 101360 / PT) (Methanosaeta thermophila).